Reading from the N-terminus, the 110-residue chain is Hydrogenase maturation factor HypA (110 aa).

H2 serves as a coordination point for Ni(2+). Residues C70, C73, C86, and C89 each contribute to the Zn(2+) site.

It belongs to the HypA/HybF family.

Involved in the maturation of [NiFe] hydrogenases. Required for nickel insertion into the metal center of the hydrogenase. The sequence is that of Hydrogenase maturation factor HypA from Geobacter sulfurreducens (strain ATCC 51573 / DSM 12127 / PCA).